Reading from the N-terminus, the 598-residue chain is Arginine--tRNA ligase (598 aa).

The 'HIGH' region signature appears at 131-141 (ANPTGPMHVGH). Residues 288–308 (KLPPPKSKKGQPPAQPQPDEE) are disordered.

The protein belongs to the class-I aminoacyl-tRNA synthetase family. Monomer.

The protein resides in the cytoplasm. It catalyses the reaction tRNA(Arg) + L-arginine + ATP = L-arginyl-tRNA(Arg) + AMP + diphosphate. In Anaeromyxobacter sp. (strain K), this protein is Arginine--tRNA ligase.